Reading from the N-terminus, the 298-residue chain is Proton-activated chloride channel (298 aa).

Topologically, residues 1–12 are cytoplasmic; the sequence is MPIGFNKACLKN. A helical transmembrane segment spans residues 13–33; that stretch reads VFTVILVLIYLALTAVAVFLA. Residues 34–245 lie on the Extracellular side of the membrane; the sequence is YQTISDFMDK…RDPFIQQVKD (212 aa). A helical membrane pass occupies residues 246 to 266; sequence IVTANPWNTIAILCGVFMALF. Residues 267–298 are Cytoplasmic-facing; that stretch reads KAADFAKLSIKWMIRIRKRHIRAKMREMNQIS.

The protein belongs to the proton-activated chloride channel family.

The protein localises to the cell membrane. It catalyses the reaction chloride(in) = chloride(out). Its function is as follows. Chloride channel gated by pH that facilitates the entry of chloride ions into cells upon exposure to extracellular acidic pH. Displays channel activity with distinct kinetic properties compared to the human ortholog channel. In Danio rerio (Zebrafish), this protein is Proton-activated chloride channel.